A 70-amino-acid polypeptide reads, in one-letter code: Large ribosomal subunit protein uL29 (70 aa).

The protein belongs to the universal ribosomal protein uL29 family.

This Clostridium botulinum (strain Alaska E43 / Type E3) protein is Large ribosomal subunit protein uL29.